We begin with the raw amino-acid sequence, 268 residues long: Aliphatic sulfonates import ATP-binding protein SsuB 2 (268 aa).

The ABC transporter domain maps to 16 to 230 (VQLRNVVRQF…DSGQAGFQSI (215 aa)). 48–55 (GASGSGKT) is a binding site for ATP.

It belongs to the ABC transporter superfamily. Aliphatic sulfonates importer (TC 3.A.1.17.2) family. As to quaternary structure, the complex is composed of two ATP-binding proteins (SsuB), two transmembrane proteins (SsuC) and a solute-binding protein (SsuA).

The protein resides in the cell inner membrane. It carries out the reaction ATP + H2O + aliphatic sulfonate-[sulfonate-binding protein]Side 1 = ADP + phosphate + aliphatic sulfonateSide 2 + [sulfonate-binding protein]Side 1.. Its function is as follows. Part of the ABC transporter complex SsuABC involved in aliphatic sulfonates import. Responsible for energy coupling to the transport system. This Pseudomonas savastanoi pv. phaseolicola (strain 1448A / Race 6) (Pseudomonas syringae pv. phaseolicola (strain 1448A / Race 6)) protein is Aliphatic sulfonates import ATP-binding protein SsuB 2.